A 231-amino-acid polypeptide reads, in one-letter code: Ribonuclease 3 (231 aa).

An RNase III domain is found at 1–134 (MKTLEKKLAE…FLGALLLDAG (134 aa)). Glutamate 47 provides a ligand contact to Mg(2+). Aspartate 51 is an active-site residue. Residues aspartate 120 and glutamate 123 each coordinate Mg(2+). Residue glutamate 123 is part of the active site. The region spanning 160–229 (DYKTALQELL…AKNALEKLQR (70 aa)) is the DRBM domain.

This sequence belongs to the ribonuclease III family. Homodimer. It depends on Mg(2+) as a cofactor.

It is found in the cytoplasm. The catalysed reaction is Endonucleolytic cleavage to 5'-phosphomonoester.. Digests double-stranded RNA. Involved in the processing of primary rRNA transcript to yield the immediate precursors to the large and small rRNAs (23S and 16S). Also processes some mRNAs, and tRNAs when they are encoded in the rRNA operon. Its function is as follows. CRISPR (clustered regularly interspaced short palindromic repeat) is an adaptive immune system that provides protection against mobile genetic elements (viruses, transposable elements and conjugative plasmids). CRISPR clusters contain spacers, sequences complementary to antecedent mobile elements, and target invading nucleic acids. CRISPR clusters are transcribed and processed into CRISPR RNA (crRNA). In this organism endogenous ribonuclease 3 and Cas9 are required for correct coprocessing of pre-crRNA and the trans-encoded small RNA (tracrRNA). Cas9, crRNA and tracrRNA are required for cleavage of invading DNA. Complements pre-crRNA and tracrRNA coprocessing defects in an rnc deletion in S.pyogenes strain 370. This chain is Ribonuclease 3, found in Streptococcus mutans serotype c (strain ATCC 700610 / UA159).